The primary structure comprises 383 residues: 8-amino-7-oxononanoate synthase (383 aa).

Residue arginine 23 coordinates substrate. Pyridoxal 5'-phosphate is bound at residue 110–111 (GF). Histidine 135 contacts substrate. 3 residues coordinate pyridoxal 5'-phosphate: serine 181, histidine 209, and threonine 235. Lysine 238 bears the N6-(pyridoxal phosphate)lysine mark. Position 351 (threonine 351) interacts with substrate.

Belongs to the class-II pyridoxal-phosphate-dependent aminotransferase family. BioF subfamily. Homodimer. It depends on pyridoxal 5'-phosphate as a cofactor.

It catalyses the reaction 6-carboxyhexanoyl-[ACP] + L-alanine + H(+) = (8S)-8-amino-7-oxononanoate + holo-[ACP] + CO2. The protein operates within cofactor biosynthesis; biotin biosynthesis. Functionally, catalyzes the decarboxylative condensation of pimeloyl-[acyl-carrier protein] and L-alanine to produce 8-amino-7-oxononanoate (AON), [acyl-carrier protein], and carbon dioxide. The protein is 8-amino-7-oxononanoate synthase of Aliivibrio fischeri (strain ATCC 700601 / ES114) (Vibrio fischeri).